Consider the following 470-residue polypeptide: Putative multidrug resistance protein MdtD (470 aa).

The Periplasmic portion of the chain corresponds to 1–11; sequence MTELPDNTRWQ. A helical transmembrane segment spans residues 12-32; sequence LWIVAFGFFMQSLDTTIVNTA. At 33–48 the chain is on the cytoplasmic side; the sequence is LPSMAKSLGESPLHMH. A helical transmembrane segment spans residues 49–69; it reads MVVVSYVLTVAVMLPASGWLA. Topologically, residues 70 to 76 are periplasmic; sequence DKIGVRN. Residues 77-97 form a helical membrane-spanning segment; sequence IFFAAIVLFTLGSLFCALSGT. Residues 98–101 are Cytoplasmic-facing; it reads LNQL. Residues 102–124 traverse the membrane as a helical segment; sequence VLARVLQGVGGAMMVPVGRLTVM. Over 125–137 the chain is Periplasmic; that stretch reads KIVPRAQYMAAMT. Residues 138 to 158 traverse the membrane as a helical segment; it reads FVTLPGQIGPLLGPALGGVLV. At 159–164 the chain is on the cytoplasmic side; sequence EYASWH. A helical transmembrane segment spans residues 165–185; the sequence is WIFLINIPVGIVGAMATFMLM. Topologically, residues 186–196 are periplasmic; the sequence is PNYTIETRRFD. The helical transmembrane segment at 197-217 threads the bilayer; the sequence is LPGFLLLAIGMAVLTLALDGS. The Cytoplasmic segment spans residues 218-224; sequence KSMGISP. A helical membrane pass occupies residues 225-245; sequence WTLAGLAAGGAAAILLYLFHA. The Periplasmic segment spans residues 246–262; the sequence is KKSSGALFSLRLFRTPT. The helical transmembrane segment at 263-283 threads the bilayer; that stretch reads FSLGLLGSFAGRIGSGMLPFM. Over 284-285 the chain is Cytoplasmic; the sequence is TP. The chain crosses the membrane as a helical span at residues 286–306; the sequence is VFLQIGLGFSPFHAGLMMIPM. Residues 307–341 lie on the Periplasmic side of the membrane; sequence VLGSMGMKRIVVQIVNRFGYRRVLVATTLGLALVS. Residues 342–362 traverse the membrane as a helical segment; sequence LLFMSVALLGWYYLLPLVLLL. Residues 363-395 are Cytoplasmic-facing; it reads QGMVNSARFSSMNTLTLKDLPDTLASSGNSLLS. Residues 396–416 traverse the membrane as a helical segment; sequence MIMQLSMSIGVTIAGMLLGMF. Over 417-430 the chain is Periplasmic; that stretch reads GQQHIGIDSSATHH. The chain crosses the membrane as a helical span at residues 431-451; that stretch reads VFMYTWLCMAVIIALPAIIFA. Residues 452–470 are Cytoplasmic-facing; the sequence is RVPNDTQQNMVISRRKRSL.

This sequence belongs to the major facilitator superfamily. TCR/Tet family.

It is found in the cell inner membrane. The sequence is that of Putative multidrug resistance protein MdtD from Salmonella paratyphi A (strain ATCC 9150 / SARB42).